A 532-amino-acid polypeptide reads, in one-letter code: Pyruvate kinase (532 aa).

Substrate is bound at residue R63. The K(+) site is built by N65, S67, D99, and T100. 65–68 (NFSH) is an ATP binding site. ATP is bound by residues R106 and K191. E256 provides a ligand contact to Mg(2+). The substrate site is built by G279, D280, and T312. Residue D280 coordinates Mg(2+).

It belongs to the pyruvate kinase family. As to quaternary structure, homotetramer. Mg(2+) is required as a cofactor. Requires K(+) as cofactor.

It carries out the reaction pyruvate + ATP = phosphoenolpyruvate + ADP + H(+). It functions in the pathway carbohydrate degradation; glycolysis; pyruvate from D-glyceraldehyde 3-phosphate: step 5/5. In Agaricus bisporus (White button mushroom), this protein is Pyruvate kinase (pkiA).